Here is a 436-residue protein sequence, read N- to C-terminus: Chromosomal replication initiator protein DnaA (436 aa).

Residues 1 to 80 (MSHEAVWQHV…QAPRFELRVV (80 aa)) form a domain I, interacts with DnaA modulators region. The tract at residues 80–100 (VPGVVVQEDIFQAAPAEAPRP) is domain II. Positions 101–317 (KLNPKYTFEN…GALMRAIAFA (217 aa)) are domain III, AAA+ region. ATP-binding residues include Gly145, Gly147, Lys148, and Thr149. The segment at 318–436 (SLNGVELTRA…LLRTLREACT (119 aa)) is domain IV, binds dsDNA.

Belongs to the DnaA family. Oligomerizes as a right-handed, spiral filament on DNA at oriC.

It localises to the cytoplasm. The catalysed reaction is ATP + H2O = ADP + phosphate + H(+). In terms of biological role, plays an essential role in the initiation and regulation of chromosomal replication. ATP-DnaA binds to the origin of replication (oriC) to initiate formation of the DNA replication initiation complex once per cell cycle. Binds the DnaA box (a 9 base pair repeat at the origin) and separates the double-stranded (ds)DNA. Forms a right-handed helical filament on oriC DNA; dsDNA binds to the exterior of the filament while single-stranded (ss)DNA is stabiized in the filament's interior. The ATP-DnaA-oriC complex binds and stabilizes one strand of the AT-rich DNA unwinding element (DUE), permitting loading of DNA polymerase. After initiation quickly degrades to an ADP-DnaA complex that is not apt for DNA replication. Binds acidic phospholipids. Its function is as follows. The DnaA box consensus is 5'-TTATC[CA]A[CA]A-3' in this bacterium; oriC consists of 13 clustered DnaA boxes and a 40 base pair AT-rich region. ATP-DnaA binds cooperatively to multiple DnaA boxes, while ADP-DnaA binds with low cooperativity to the individual DnaA boxes. About 16-18 DnaA protein molecules bind their sites in oriC. Has a slow ATPase activity. Binds linear and supercoiled DNA. This chain is Chromosomal replication initiator protein DnaA, found in Thermus thermophilus (strain ATCC 27634 / DSM 579 / HB8).